A 226-amino-acid polypeptide reads, in one-letter code: Uracil-DNA glycosylase (226 aa).

D64 (proton acceptor) is an active-site residue.

This sequence belongs to the uracil-DNA glycosylase (UDG) superfamily. UNG family.

The protein resides in the cytoplasm. The catalysed reaction is Hydrolyzes single-stranded DNA or mismatched double-stranded DNA and polynucleotides, releasing free uracil.. Functionally, excises uracil residues from the DNA which can arise as a result of misincorporation of dUMP residues by DNA polymerase or due to deamination of cytosine. This chain is Uracil-DNA glycosylase, found in Vibrio parahaemolyticus serotype O3:K6 (strain RIMD 2210633).